The chain runs to 171 residues: Adenine phosphoribosyltransferase (171 aa).

This sequence belongs to the purine/pyrimidine phosphoribosyltransferase family. In terms of assembly, homodimer.

Its subcellular location is the cytoplasm. The enzyme catalyses AMP + diphosphate = 5-phospho-alpha-D-ribose 1-diphosphate + adenine. It participates in purine metabolism; AMP biosynthesis via salvage pathway; AMP from adenine: step 1/1. Functionally, catalyzes a salvage reaction resulting in the formation of AMP, that is energically less costly than de novo synthesis. The protein is Adenine phosphoribosyltransferase of Rhodospirillum centenum (strain ATCC 51521 / SW).